Here is a 462-residue protein sequence, read N- to C-terminus: Chromosomal replication initiator protein DnaA (462 aa).

The interval 1–83 (MSLSLWQQCL…LRFEVGSKPA (83 aa)) is domain I, interacts with DnaA modulators. Residues 83–125 (AVRAHSHPVTASVSAPVAPVTRSAPVRPSWDSSPAQPELSYRS) form a domain II region. The disordered stretch occupies residues 105–127 (SAPVRPSWDSSPAQPELSYRSNV). The span at 112 to 127 (WDSSPAQPELSYRSNV) shows a compositional bias: polar residues. The tract at residues 126–342 (NVNPKHTFDN…GALNRVIANA (217 aa)) is domain III, AAA+ region. ATP contacts are provided by Gly-170, Gly-172, Lys-173, and Thr-174. A domain IV, binds dsDNA region spans residues 343–462 (NFTGRAITID…FSNLIRTLSS (120 aa)).

It belongs to the DnaA family. Oligomerizes as a right-handed, spiral filament on DNA at oriC.

The protein localises to the cytoplasm. In terms of biological role, plays an essential role in the initiation and regulation of chromosomal replication. ATP-DnaA binds to the origin of replication (oriC) to initiate formation of the DNA replication initiation complex once per cell cycle. Binds the DnaA box (a 9 base pair repeat at the origin) and separates the double-stranded (ds)DNA. Forms a right-handed helical filament on oriC DNA; dsDNA binds to the exterior of the filament while single-stranded (ss)DNA is stabiized in the filament's interior. The ATP-DnaA-oriC complex binds and stabilizes one strand of the AT-rich DNA unwinding element (DUE), permitting loading of DNA polymerase. After initiation quickly degrades to an ADP-DnaA complex that is not apt for DNA replication. Binds acidic phospholipids. This chain is Chromosomal replication initiator protein DnaA, found in Yersinia enterocolitica serotype O:8 / biotype 1B (strain NCTC 13174 / 8081).